Reading from the N-terminus, the 540-residue chain is Early growth response protein 1 (540 aa).

Disordered regions lie at residues 1–105 (MAAA…AESF) and 162–240 (VSMT…PAYP). The span at 64–75 (SSGGGGGGGGGS) shows a compositional bias: gly residues. Over residues 167–190 (PPATSSSASSPAASSSASQSPPLS) the composition is skewed to low complexity. Over residues 192–201 (AVQSNDSSPI) the composition is skewed to polar residues. Lysine 304 is covalently cross-linked (Glycyl lysine isopeptide (Lys-Gly) (interchain with G-Cter in SUMO2)). The interval 317–337 (PSRMRKYPNRPSKTPPHERPY) is disordered. Residues 337 to 361 (YACPVESCDRRFSRSDELTRHIRIH) form a C2H2-type 1 zinc finger. A C2H2-type 2; degenerate zinc finger spans residues 366–388 (PQCRISMRNFSRSDHLTTHIRTH). A C2H2-type 3 zinc finger spans residues 394–416 (FACDICGRKFARSDERKRHTKIH). The disordered stretch occupies residues 407-482 (DERKRHTKIH…SPGSSTYPSP (76 aa)). The span at 411 to 421 (RHTKIHLRQKD) shows a compositional bias: basic residues. A compositionally biased stretch (low complexity) spans 427–482 (SAASAATSSLPSYPSPVATSYPSPATTSYPSPATTSYPSPVPTSYSSPGSSTYPSP).

It belongs to the EGR C2H2-type zinc-finger protein family. Interacts with SNAI1 and SP1 upon 12-O-tetradecanoylphorbol-13-acetate (TPA) induction.

Its subcellular location is the nucleus. It localises to the cytoplasm. Its function is as follows. Transcriptional regulator. Recognizes and binds to the DNA sequence 5'-GCG(T/G)GGGCG-3'(EGR-site) in the promoter region of target genes. Binds double-stranded target DNA, irrespective of the cytosine methylation status. Regulates the transcription of numerous target genes, and thereby plays an important role in regulating the response to growth factors, DNA damage, and ischemia. Plays a role in the regulation of cell survival, proliferation and cell death. Activates expression of p53/TP53 and TGFB1, and thereby helps prevent tumor formation. Required for normal progress through mitosis and normal proliferation of hepatocytes after partial hepatectomy. Mediates responses to ischemia and hypoxia; regulates the expression of proteins such as IL1B and CXCL2 that are involved in inflammatory processes and development of tissue damage after ischemia. Regulates biosynthesis of luteinizing hormone (LHB) in the pituitary. Regulates the amplitude of the expression rhythms of clock genes: BMAL1, PER2 and NR1D1 in the liver via the activation of PER1 (clock repressor) transcription. Regulates the rhythmic expression of core-clock gene BMAL1 in the suprachiasmatic nucleus (SCN). The polypeptide is Early growth response protein 1 (EGR1) (Bos taurus (Bovine)).